The primary structure comprises 550 residues: Glutamine--tRNA ligase (550 aa).

The short motif at 34–44 is the 'HIGH' region element; the sequence is PEPNGYLHLGH. Residues 35–37 and 41–47 each bind ATP; these read EPN and HLGHAKS. Residues Asp67 and Tyr212 each contribute to the L-glutamine site. ATP-binding positions include Thr231, 261–262, and 269–271; these read RL and LSK. The 'KMSKS' region motif lies at 268–272; the sequence is VLSKR.

It belongs to the class-I aminoacyl-tRNA synthetase family. In terms of assembly, monomer.

It localises to the cytoplasm. The catalysed reaction is tRNA(Gln) + L-glutamine + ATP = L-glutaminyl-tRNA(Gln) + AMP + diphosphate. The chain is Glutamine--tRNA ligase from Buchnera aphidicola subsp. Baizongia pistaciae (strain Bp).